The primary structure comprises 908 residues: Protein translocase subunit SecA (908 aa).

ATP-binding positions include Gln87, 105 to 109, and Asp512; that span reads GEGKT. Positions 876–908 are disordered; the sequence is QAPMIRDGEKVGRNDPCPCGSGRKYKQCHGKLS. Positions 892, 894, 903, and 904 each coordinate Zn(2+). A compositionally biased stretch (basic residues) spans 898-908; it reads RKYKQCHGKLS.

Belongs to the SecA family. As to quaternary structure, monomer and homodimer. Part of the essential Sec protein translocation apparatus which comprises SecA, SecYEG and auxiliary proteins SecDF-YajC and YidC. Zn(2+) serves as cofactor.

It is found in the cell inner membrane. It localises to the cytoplasm. It carries out the reaction ATP + H2O + cellular proteinSide 1 = ADP + phosphate + cellular proteinSide 2.. Its function is as follows. Part of the Sec protein translocase complex. Interacts with the SecYEG preprotein conducting channel. Has a central role in coupling the hydrolysis of ATP to the transfer of proteins into and across the cell membrane, serving both as a receptor for the preprotein-SecB complex and as an ATP-driven molecular motor driving the stepwise translocation of polypeptide chains across the membrane. In Shewanella baltica (strain OS185), this protein is Protein translocase subunit SecA.